The primary structure comprises 972 residues: mRNA transport regulator MTR10 (972 aa).

The protein resides in the nucleus. Involved in mRNA transport from nucleus to cytoplasm. The sequence is that of mRNA transport regulator MTR10 (MTR10) from Saccharomyces cerevisiae (strain ATCC 204508 / S288c) (Baker's yeast).